The chain runs to 349 residues: Insulin gene enhancer protein ISL-1 (349 aa).

LIM zinc-binding domains are found at residues 17–70 (CVGC…CKRD) and 79–133 (CAKC…RADH). Residues 181–240 (TTRVRTVLNEKQLHTLRTCYAANPRPDALMKEQLVEMTGLSPRVIRVWFQNKRCKDKKRS) constitute a DNA-binding region (homeobox). The LIM-binding domain (LID) stretch occupies residues 262–291 (GTPMVAASPERHDGGLQANPVEVQSYQPPW). Residues 312-349 (VNFSEGGPGSNSTGSEVASMSSQLPDTPNSMVASPIEA) are disordered. The span at 321-343 (SNSTGSEVASMSSQLPDTPNSMV) shows a compositional bias: polar residues.

As to quaternary structure, at neuronal promoters, displaces LDB1 from LHX3 LIM domain to form a ternary complex in which ISL1 contacts both LHX3 and LDB1; allosteric structural changes in the DNA binding domain of LHX3, induced by the ISL1:LHX3 interaction, may explain differences in sequence specificity of the different complexes. Interacts with LHX3. Interacts (via C-terminus) with POU4F2 (via C-terminus) isoform 1. Interacts with POU3F2. Interacts with POU4F3. Interacts (via N-terminal domain) with MLIP; the interaction represses ISL1 transactivator activity. Interacts with GCN5/KAT2A. Interactions of ISL1 with MLIP1 or KAT2A may be mutually exclusive. In terms of processing, ubiquitinated probably by WWP1 E3 ubiquitin ligase; ubiquitination is followed by protein degradation. Post-translationally, phosphorylated. As to expression, expressed in subsets of neurons of the adrenal medulla and dorsal root ganglion, inner nuclear and ganglion cell layers in the retina, the pineal and some regions of the brain.

It localises to the nucleus. Functionally, DNA-binding transcriptional activator. Recognizes and binds to the consensus octamer binding site 5'-ATAATTAA-3' in promoter of target genes. Plays a fundamental role in the gene regulatory network essential for retinal ganglion cell (RGC) differentiation. Cooperates with the transcription factor POU4F2 to achieve maximal levels of expression of RGC target genes and RGC fate specification in the developing retina. Involved in the specification of motor neurons in cooperation with LHX3 and LDB1. Binds to insulin gene enhancer sequences. Essential for heart development. Marker of one progenitor cell population that give rise to the outflow tract, right ventricle, a subset of left ventricular cells, and a large number of atrial cells as well, its function is required for these progenitors to contribute to the heart. Controls the expression of FGF and BMP growth factors in this cell population and is required for proliferation and survival of cells within pharyngeal foregut endoderm and adjacent splanchnic mesoderm as well as for migration of cardiac progenitors into the heart. The sequence is that of Insulin gene enhancer protein ISL-1 (ISL1) from Homo sapiens (Human).